A 272-amino-acid polypeptide reads, in one-letter code: Hematopoietically-expressed homeobox protein hhex (272 aa).

Residues 137–196 (RKGGQVRFSNDQTIELEKKFETQKYLSPPERKRLAKMLQLSERQVKTWFQNRRAKWRRLK) constitute a DNA-binding region (homeobox). Residues 222-272 (CLSAEQKSRESSLDDPTSSPTSQGNLDSEVSDDSDQEVDIEGDKGYYNCAH) form a disordered region. The span at 250–261 (EVSDDSDQEVDI) shows a compositional bias: acidic residues.

In terms of tissue distribution, first expressed in the dorsal endomesoderm of the gastrula stage embryo. The dorsal endomesoderm contributes to forming the embryonic liver, and expression continues in the liver throughout development. Also expressed in precursors of the developing thyroid gland, and beginning at the tailbud stage, expressed in the ventral region of the head. Also transiently expressed in the endothelial layer of developing vascular tissues of the embryo, beginning at the tailbud stages.

Its subcellular location is the nucleus. Its function is as follows. Recognizes the DNA sequence 5'-ATTAA-3'. Transcriptional repressor. Regulates the differentiation of both endothelial and blood cells. Probably plays a role in the proliferation of vascular endothelial cells during blood vessel development. Establishes anterior identity at two levels; acts early to enhance canonical wnt-signaling by repressing expression of tle4, and acts later to inhibit nodal-signaling by directly targeting nodal/nr1 and nodal2/nr2. May play a role in liver development. Induces heart development. This chain is Hematopoietically-expressed homeobox protein hhex, found in Xenopus laevis (African clawed frog).